The sequence spans 195 residues: Imidazoleglycerol-phosphate dehydratase (195 aa).

The protein belongs to the imidazoleglycerol-phosphate dehydratase family.

It is found in the cytoplasm. The enzyme catalyses D-erythro-1-(imidazol-4-yl)glycerol 3-phosphate = 3-(imidazol-4-yl)-2-oxopropyl phosphate + H2O. It participates in amino-acid biosynthesis; L-histidine biosynthesis; L-histidine from 5-phospho-alpha-D-ribose 1-diphosphate: step 6/9. In Exiguobacterium sp. (strain ATCC BAA-1283 / AT1b), this protein is Imidazoleglycerol-phosphate dehydratase.